A 258-amino-acid polypeptide reads, in one-letter code: UPF0246 protein plu0566 (258 aa).

The protein belongs to the UPF0246 family.

The sequence is that of UPF0246 protein plu0566 from Photorhabdus laumondii subsp. laumondii (strain DSM 15139 / CIP 105565 / TT01) (Photorhabdus luminescens subsp. laumondii).